We begin with the raw amino-acid sequence, 434 residues long: Glutamyl-tRNA reductase (434 aa).

Substrate-binding positions include 49 to 52 (TCNR), Ser109, 114 to 116 (EPQ), and Gln120. Cys50 acts as the Nucleophile in catalysis. 189 to 194 (GAGEMC) serves as a coordination point for NADP(+).

The protein belongs to the glutamyl-tRNA reductase family. In terms of assembly, homodimer.

It carries out the reaction (S)-4-amino-5-oxopentanoate + tRNA(Glu) + NADP(+) = L-glutamyl-tRNA(Glu) + NADPH + H(+). The protein operates within porphyrin-containing compound metabolism; protoporphyrin-IX biosynthesis; 5-aminolevulinate from L-glutamyl-tRNA(Glu): step 1/2. Its function is as follows. Catalyzes the NADPH-dependent reduction of glutamyl-tRNA(Glu) to glutamate 1-semialdehyde (GSA). The polypeptide is Glutamyl-tRNA reductase (Trichlorobacter lovleyi (strain ATCC BAA-1151 / DSM 17278 / SZ) (Geobacter lovleyi)).